We begin with the raw amino-acid sequence, 199 residues long: Recombination protein RecR (199 aa).

A C4-type zinc finger spans residues 57-72 (CEKCNNFTEEVVCELC). One can recognise a Toprim domain in the interval 80–175 (ALLCVVEMPA…KITRIARGLP (96 aa)).

Belongs to the RecR family.

Functionally, may play a role in DNA repair. It seems to be involved in an RecBC-independent recombinational process of DNA repair. It may act with RecF and RecO. The chain is Recombination protein RecR from Nitrosospira multiformis (strain ATCC 25196 / NCIMB 11849 / C 71).